A 184-amino-acid chain; its full sequence is Holliday junction branch migration complex subunit RuvA (184 aa).

Residues 1–64 (MIKAIEGIIT…EDANLLYGFI (64 aa)) are domain I. The domain II stretch occupies residues 65–137 (KESEQRIFEM…LSDAKFGEIN (73 aa)). A region of interest (flexible linker) is located at residue asparagine 137. The tract at residues 138 to 184 (SMPSYQNEAFMALESLGFKRDRISKVLNECSSNDTASLIKEALKKLA) is domain III.

It belongs to the RuvA family. Homotetramer. Forms an RuvA(8)-RuvB(12)-Holliday junction (HJ) complex. HJ DNA is sandwiched between 2 RuvA tetramers; dsDNA enters through RuvA and exits via RuvB. An RuvB hexamer assembles on each DNA strand where it exits the tetramer. Each RuvB hexamer is contacted by two RuvA subunits (via domain III) on 2 adjacent RuvB subunits; this complex drives branch migration. In the full resolvosome a probable DNA-RuvA(4)-RuvB(12)-RuvC(2) complex forms which resolves the HJ.

The protein localises to the cytoplasm. In terms of biological role, the RuvA-RuvB-RuvC complex processes Holliday junction (HJ) DNA during genetic recombination and DNA repair, while the RuvA-RuvB complex plays an important role in the rescue of blocked DNA replication forks via replication fork reversal (RFR). RuvA specifically binds to HJ cruciform DNA, conferring on it an open structure. The RuvB hexamer acts as an ATP-dependent pump, pulling dsDNA into and through the RuvAB complex. HJ branch migration allows RuvC to scan DNA until it finds its consensus sequence, where it cleaves and resolves the cruciform DNA. This is Holliday junction branch migration complex subunit RuvA from Campylobacter fetus subsp. fetus (strain 82-40).